The sequence spans 206 residues: Cytochrome c biogenesis ATP-binding export protein CcmA (206 aa).

Positions 2 to 206 (LEARDVVCIR…IQLTPSEGTP (205 aa)) constitute an ABC transporter domain. 34 to 41 (GANGVGKT) is a binding site for ATP.

The protein belongs to the ABC transporter superfamily. CcmA exporter (TC 3.A.1.107) family. In terms of assembly, the complex is composed of two ATP-binding proteins (CcmA) and two transmembrane proteins (CcmB).

Its subcellular location is the cell inner membrane. The enzyme catalyses heme b(in) + ATP + H2O = heme b(out) + ADP + phosphate + H(+). Part of the ABC transporter complex CcmAB involved in the biogenesis of c-type cytochromes; once thought to export heme, this seems not to be the case, but its exact role is uncertain. Responsible for energy coupling to the transport system. In Pectobacterium atrosepticum (strain SCRI 1043 / ATCC BAA-672) (Erwinia carotovora subsp. atroseptica), this protein is Cytochrome c biogenesis ATP-binding export protein CcmA.